The primary structure comprises 280 residues: Pantothenate synthetase (280 aa).

30 to 37 serves as a coordination point for ATP; sequence MGYLHEGH. The active-site Proton donor is the H37. Position 61 (Q61) interacts with (R)-pantoate. Q61 contributes to the beta-alanine binding site. Residue 147–150 coordinates ATP; it reads GQKD. Q153 provides a ligand contact to (R)-pantoate. ATP contacts are provided by residues V176 and 184-187; that span reads MSSR.

This sequence belongs to the pantothenate synthetase family. As to quaternary structure, homodimer.

The protein resides in the cytoplasm. The enzyme catalyses (R)-pantoate + beta-alanine + ATP = (R)-pantothenate + AMP + diphosphate + H(+). The protein operates within cofactor biosynthesis; (R)-pantothenate biosynthesis; (R)-pantothenate from (R)-pantoate and beta-alanine: step 1/1. Catalyzes the condensation of pantoate with beta-alanine in an ATP-dependent reaction via a pantoyl-adenylate intermediate. This is Pantothenate synthetase from Fervidobacterium nodosum (strain ATCC 35602 / DSM 5306 / Rt17-B1).